Here is a 189-residue protein sequence, read N- to C-terminus: Cytidylate kinase (189 aa).

7–15 is an ATP binding site; that stretch reads GPPGSGKTS.

The protein belongs to the cytidylate kinase family. Type 2 subfamily.

The protein resides in the cytoplasm. It catalyses the reaction CMP + ATP = CDP + ADP. It carries out the reaction dCMP + ATP = dCDP + ADP. The sequence is that of Cytidylate kinase from Saccharolobus islandicus (strain Y.N.15.51 / Yellowstone #2) (Sulfolobus islandicus).